The primary structure comprises 281 residues: Putative pyruvate, phosphate dikinase regulatory protein (281 aa).

150–157 (GVSRTSKT) is an ADP binding site.

This sequence belongs to the pyruvate, phosphate/water dikinase regulatory protein family. PDRP subfamily.

It catalyses the reaction N(tele)-phospho-L-histidyl/L-threonyl-[pyruvate, phosphate dikinase] + ADP = N(tele)-phospho-L-histidyl/O-phospho-L-threonyl-[pyruvate, phosphate dikinase] + AMP + H(+). It carries out the reaction N(tele)-phospho-L-histidyl/O-phospho-L-threonyl-[pyruvate, phosphate dikinase] + phosphate + H(+) = N(tele)-phospho-L-histidyl/L-threonyl-[pyruvate, phosphate dikinase] + diphosphate. In terms of biological role, bifunctional serine/threonine kinase and phosphorylase involved in the regulation of the pyruvate, phosphate dikinase (PPDK) by catalyzing its phosphorylation/dephosphorylation. In Sorangium cellulosum (strain So ce56) (Polyangium cellulosum (strain So ce56)), this protein is Putative pyruvate, phosphate dikinase regulatory protein.